The primary structure comprises 353 residues: MAAAEAANCIMEVSCGQAESSEKPNAEDMTSKDYYFDSYAHFGIHEEMLKDEVRTLTYRNSMFHNRHLFKDKVVLDVGSGTGILCMFAAKAGARKVIGIECSSISDYAVKIVKANKLDHVVTIIKGKVEEVELPVEKVDIIISEWMGYCLFYESMLNTVLHARDKWLAPDGLIFPDRATLYVTAIEDRQYKDYKIHWWENVYGFDMSCIKDVAIKEPLVDVVDPKQLVTNACLIKEVDIYTVKVEDLTFTSPFCLQVKRNDYVHALVAYFNIEFTRCHKRTGFSTSPESPYTHWKQTVFYMEDYLTVKTGEEIFGTIGMRPNAKNNRDLDFTIDLDFKGQLCELSCSTDYRMR.

In terms of domain architecture, SAM-dependent MTase PRMT-type spans 32–353 (KDYYFDSYAH…LSCSTDYRMR (322 aa)). Positions 45, 54, 78, and 100 each coordinate S-adenosyl-L-methionine. N6-succinyllysine is present on Lys116. Lys127 participates in a covalent cross-link: Glycyl lysine isopeptide (Lys-Gly) (interchain with G-Cter in ubiquitin). Position 129 (Glu129) interacts with S-adenosyl-L-methionine. Catalysis depends on residues Glu144 and Glu153. N6-acetyllysine is present on residues Lys210 and Lys215. Phosphoserine occurs at positions 286 and 289.

It belongs to the class I-like SAM-binding methyltransferase superfamily. Protein arginine N-methyltransferase family. As to quaternary structure, homodimer and heterodimer with PRMT8. Homooctamer; individual homodimers associates to form a homooctamer. Interacts with NFATC2IP. Interacts with ILF3 and SUPT5H. Individual homodimers can associate to form a homohexamer. Interacts with FOXO1; the interaction methylates FOXO1, retaining it in the nucleus and increasing its transcriptional activity. Methylation of FOXO1 is increased with oxidative stress. Interacts with CHTOP; the interaction methylates CHTOP, enabling its interaction with the 5FMC complex. Interacts with BTG1, BTG2 and IFNAR1. Interacts with and probably methylates ATXN2L. Component of the methylosome, a 20S complex containing at least CLNS1A/pICln, PRMT5/SKB1, WDR77/MEP50, PRMT1 and ERH. Interacts with DHX9 (via RGG region). Interacts (via N-terminus) with HABP4. Interacts with MAP3K5/ASK1; the interaction results in MAP3K5 methylation by PRMT1 which inhibits MAP3K5 activation. Interacts with TRIM48; the interaction results in ubiquitination of PRMT1 by TRIM48, leading to PRMT1 proteasomal degradation and activation of MAP3K5. Interacts with GATOR1 complex; this interaction is S-adenosyl-L-methionine (SAM) dependent and is perturbated by SAMTOR in a SAM-sensitive manner. Interacts with GFI1; promoting recognition and binding of MRE11 and TP53BP1 substrates by PRMT1. In terms of processing, polyubiquitinated at Lys-127 by the SCF(FBXL17) complex, leading to its subsequent degradation. Ubiquitination is regulated by acetylation at Lys-210 and Lys-215. Polyubiquitinated by E3 ubiquitin-protein ligase TRIM48, leading to suppression of MAP3K5/ASK1 methylation and subsequent MAP3K5 activation. Post-translationally, acetylation at Lys-210 and Lys-215 regulates ubiquitination by the SCF(FBXL17) complex. Acetylated at Lys-215 by p300/EP300. Deacetylated at Lys-210 and Lys-215 by SIRT1. As to expression, ubiquitous.

The protein resides in the nucleus. It is found in the nucleoplasm. It localises to the cytoplasm. The protein localises to the cytosol. Its subcellular location is the lysosome membrane. The catalysed reaction is L-arginyl-[protein] + 2 S-adenosyl-L-methionine = N(omega),N(omega)-dimethyl-L-arginyl-[protein] + 2 S-adenosyl-L-homocysteine + 2 H(+). The enzyme catalyses L-arginyl-[protein] + S-adenosyl-L-methionine = N(omega)-methyl-L-arginyl-[protein] + S-adenosyl-L-homocysteine + H(+). It catalyses the reaction N(omega)-methyl-L-arginyl-[protein] + S-adenosyl-L-methionine = N(omega),N(omega)-dimethyl-L-arginyl-[protein] + S-adenosyl-L-homocysteine + H(+). Its function is as follows. Arginine methyltransferase that methylates (mono and asymmetric dimethylation) the guanidino nitrogens of arginyl residues present in proteins such as ESR1, histone H2, H3 and H4, FMR1, ILF3, HNRNPA1, HNRNPD, NFATC2IP, SUPT5H, TAF15, EWS, HABP4, SERBP1, RBM15, FOXO1, CHTOP, MAP3K5/ASK1 and MICU1. Constitutes the main enzyme that mediates monomethylation and asymmetric dimethylation of histone H4 'Arg-3' (H4R3me1 and H4R3me2a, respectively), a specific tag for epigenetic transcriptional activation. May be involved in the regulation of TAF15 transcriptional activity, act as an activator of estrogen receptor (ER)-mediated transactivation, play a key role in neurite outgrowth and act as a negative regulator of megakaryocytic differentiation, by modulating p38 MAPK pathway. Methylates RBM15, promoting ubiquitination and degradation of RBM15. Methylates MRE11 and TP53BP1, promoting the DNA damage response. Methylates FOXO1 and retains it in the nucleus increasing its transcriptional activity. Methylates CHTOP and this methylation is critical for its 5-hydroxymethylcytosine (5hmC)-binding activity. Methylates MAP3K5/ASK1 at 'Arg-85' and 'Arg-87' which promotes association of MAP3K5 with thioredoxin and negatively regulates MAP3K5 association with TRAF2, inhibiting MAP3K5 stimulation and MAP3K5-induced activation of JNK. Methylates H4R3 in genes involved in glioblastomagenesis in a CHTOP- and/or TET1-dependent manner. Plays a role in regulating alternative splicing in the heart. Methylates NPRL2 at 'Arg-78' leading to inhibition of its GTPase activator activity and then the GATOR1 complex and consequently inducing timely mTORC1 activation under methionine-sufficient conditions. This Rattus norvegicus (Rat) protein is Protein arginine N-methyltransferase 1.